The chain runs to 557 residues: Potassium-transporting ATPase potassium-binding subunit (557 aa).

12 consecutive transmembrane segments (helical) span residues 5–25 (GFLL…PLGS), 63–83 (LCAI…MLLG), 132–152 (GLTV…FALI), 170–190 (LLRI…LFFI), 253–273 (FVQM…FGEV), 283–303 (LLWA…WAEV), 329–349 (VLVS…AVIA), 356–376 (ALGG…FGGV), 379–399 (GLYG…LMIG), 416–436 (LTAL…ALAM), 484–504 (LLAL…MAIA), and 526–546 (LFVG…FIPA).

The protein belongs to the KdpA family. In terms of assembly, the system is composed of three essential subunits: KdpA, KdpB and KdpC.

It localises to the cell inner membrane. Its function is as follows. Part of the high-affinity ATP-driven potassium transport (or Kdp) system, which catalyzes the hydrolysis of ATP coupled with the electrogenic transport of potassium into the cytoplasm. This subunit binds the periplasmic potassium ions and delivers the ions to the membrane domain of KdpB through an intramembrane tunnel. The polypeptide is Potassium-transporting ATPase potassium-binding subunit (Escherichia coli O81 (strain ED1a)).